Reading from the N-terminus, the 309-residue chain is Type II methyltransferase M.HindIII (309 aa).

Belongs to the N(4)/N(6)-methyltransferase family.

The enzyme catalyses a 2'-deoxyadenosine in DNA + S-adenosyl-L-methionine = an N(6)-methyl-2'-deoxyadenosine in DNA + S-adenosyl-L-homocysteine + H(+). A beta subtype methylase that recognizes the double-stranded sequence 5'-AAGCTT-3', methylates A-1 on both strands, and protects the DNA from cleavage by the HindIII endonuclease. This is Type II methyltransferase M.HindIII from Haemophilus influenzae (strain ATCC 51907 / DSM 11121 / KW20 / Rd).